The chain runs to 53 residues: uncharacterized protein (53 aa).

This is an uncharacterized protein from Saccharomyces cerevisiae (strain ATCC 204508 / S288c) (Baker's yeast).